We begin with the raw amino-acid sequence, 432 residues long: MDIRQLCGNAGVASVKMAALSGEVKNNALMKIADALLANSKRIIEANQHDLERSEKENLASPLLKRLKFDEKKINDVVEGIKSLMALEEPIGKTLLANKLDDELELYKVTCPIGVIGIIFESRPDALVQISTLCLKSGNCVLLKGGSEAKETNRVLTGVIEEATVAAGLPKGWIGLLESRDDVNEMLKMDQFIDLIIPRGSNDFVRYIMDNSRIPVMGHADGICHVYVDESADLEMAKKITVDSKTQYVAVCNATETLLVDRAVAKEFLPGLKAELDKKNVEIFGDEETADIIEVKPASDQDWATEYLDYIISIKIVAGMDEAIKHIITYGSGHTDCIVTKDKAKAVNFMNLVDSGNVFWNASTRFSDGFKYGFGAEVGISTSKLHARGPVGLDGLLSYKYMLIGNGQIVDDYATNKRQFKHERMNKQIDEI.

This sequence belongs to the gamma-glutamyl phosphate reductase family.

It is found in the cytoplasm. It catalyses the reaction L-glutamate 5-semialdehyde + phosphate + NADP(+) = L-glutamyl 5-phosphate + NADPH + H(+). Its pathway is amino-acid biosynthesis; L-proline biosynthesis; L-glutamate 5-semialdehyde from L-glutamate: step 2/2. In terms of biological role, catalyzes the NADPH-dependent reduction of L-glutamate 5-phosphate into L-glutamate 5-semialdehyde and phosphate. The product spontaneously undergoes cyclization to form 1-pyrroline-5-carboxylate. The polypeptide is Gamma-glutamyl phosphate reductase (Ruminiclostridium cellulolyticum (strain ATCC 35319 / DSM 5812 / JCM 6584 / H10) (Clostridium cellulolyticum)).